A 332-amino-acid chain; its full sequence is Glyceraldehyde-3-phosphate dehydrogenase 3 (332 aa).

NAD(+) is bound by residues Arg-11, Ile-12, and Asp-33. Residues Lys-46 and Lys-63 each participate in a glycyl lysine isopeptide (Lys-Gly) (interchain with G-Cter in ubiquitin) cross-link. Thr-120 provides a ligand contact to NAD(+). 149 to 151 contributes to the D-glyceraldehyde 3-phosphate binding site; it reads SCT. The active-site Nucleophile is the Cys-150. Residues Cys-150 and Cys-154 each carry the cysteine persulfide modification. A Glycyl lysine isopeptide (Lys-Gly) (interchain with G-Cter in URM1) cross-link involves residue Lys-160. Residues Thr-180, 209 to 210, and Arg-232 contribute to the D-glyceraldehyde 3-phosphate site; that span reads TG. Ser-302 is subject to Phosphoserine. Lys-307 is covalently cross-linked (Glycyl lysine isopeptide (Lys-Gly) (interchain with G-Cter in URM1)). Asn-314 and Tyr-318 together coordinate NAD(+).

It belongs to the glyceraldehyde-3-phosphate dehydrogenase family. In terms of assembly, homotetramer. Conjugated to URM1, a ubiquitin-like protein, in response to oxidative stresses. The attachment of URM1 to lysine residues exclusively depends on the presence of a peroxidatic cysteine in the target protein, with low specificity for the particular residue, motif, or structural context at which urmylation can occur. The URM1-conjugation reaction is mechanistically and directly coupled to the process of cysteine persulfidation, transfering the sulfur atom of the URM1 thiocarboxyl group to redox-active cysteine residues in the target protein if it is exposed to oxidative conditions. In terms of processing, persulfidated on specific redox-active cysteine residues. Persulfidation (also called protein S-sulfhydration) may provide a molecular mechanism that enables cells to protect vulnerable cysteine residues from reactive oxygen species (ROS) under stress conditions.

It is found in the cytoplasm. It localises to the mitochondrion. The enzyme catalyses D-glyceraldehyde 3-phosphate + phosphate + NAD(+) = (2R)-3-phospho-glyceroyl phosphate + NADH + H(+). It carries out the reaction NADH + H2O = (6R)-NADHX. It catalyses the reaction NADH + H2O = (6S)-NADHX. The catalysed reaction is NADPH + H2O = (6R)-NADPHX. The enzyme catalyses NADPH + H2O = (6S)-NADPHX. It participates in carbohydrate degradation; glycolysis; pyruvate from D-glyceraldehyde 3-phosphate: step 1/5. Glyceraldehyde-3-phosphate dehydrogenase (GAPDH) involved in glycolysis and gluconeogenesis. Catalyzes the reaction of glyceraldehyde-3-phosphate to 1,3 bis-phosphoglycerate. The contribution of the TDH1, TDH2, and TDH3 to the total glyceraldehyde-3-phosphate dehydrogenase activity is 10-15, 25-30, and 50-60%, respectively. Its function is as follows. As a side activity, catalyzes the hydration of the nicotinamide ring of NADH or NADPH at the C6 position to give the corresponding hydrates, NADHX and NADPHX, which exist as R and S epimers, that cannot act as electron donors or acceptors and inhibit several dehydrogenases, making them toxic. The sequence is that of Glyceraldehyde-3-phosphate dehydrogenase 3 from Saccharomyces cerevisiae (strain ATCC 204508 / S288c) (Baker's yeast).